A 146-amino-acid chain; its full sequence is Acetyl-CoA decarbonylase/synthase complex subunit epsilon (146 aa).

The protein belongs to the CdhB family. As to quaternary structure, heterotetramer of two alpha and two epsilon subunits. The ACDS complex is made up of alpha, epsilon, beta, gamma and delta subunits with a probable stoichiometry of (alpha(2)epsilon(2))(4)-beta(8)-(gamma(1)delta(1))(8).

In terms of biological role, part of a complex that catalyzes the reversible cleavage of acetyl-CoA, allowing autotrophic growth from CO(2). The alpha-epsilon subcomponent functions as a carbon monoxide dehydrogenase. The precise role of the epsilon subunit is unclear; it may have a stabilizing role within the alpha(2)epsilon(2) component and/or be involved in electron transfer to FAD during a potential FAD-mediated CO oxidation. The polypeptide is Acetyl-CoA decarbonylase/synthase complex subunit epsilon (Methanocaldococcus jannaschii (strain ATCC 43067 / DSM 2661 / JAL-1 / JCM 10045 / NBRC 100440) (Methanococcus jannaschii)).